The chain runs to 474 residues: Aspartyl/glutamyl-tRNA(Asn/Gln) amidotransferase subunit B (474 aa).

It belongs to the GatB/GatE family. GatB subfamily. Heterotrimer of A, B and C subunits.

It carries out the reaction L-glutamyl-tRNA(Gln) + L-glutamine + ATP + H2O = L-glutaminyl-tRNA(Gln) + L-glutamate + ADP + phosphate + H(+). The enzyme catalyses L-aspartyl-tRNA(Asn) + L-glutamine + ATP + H2O = L-asparaginyl-tRNA(Asn) + L-glutamate + ADP + phosphate + 2 H(+). In terms of biological role, allows the formation of correctly charged Asn-tRNA(Asn) or Gln-tRNA(Gln) through the transamidation of misacylated Asp-tRNA(Asn) or Glu-tRNA(Gln) in organisms which lack either or both of asparaginyl-tRNA or glutaminyl-tRNA synthetases. The reaction takes place in the presence of glutamine and ATP through an activated phospho-Asp-tRNA(Asn) or phospho-Glu-tRNA(Gln). The polypeptide is Aspartyl/glutamyl-tRNA(Asn/Gln) amidotransferase subunit B (Wolbachia sp. subsp. Brugia malayi (strain TRS)).